The following is a 326-amino-acid chain: DNA-directed RNA polymerase subunit alpha (326 aa).

An alpha N-terminal domain (alpha-NTD) region spans residues 1-231; it reads MQSNALLKPR…DQLSVFADLE (231 aa). Residues 245-326 form an alpha C-terminal domain (alpha-CTD) region; it reads IDPVLLRPVD…WPPAGLEKLG (82 aa).

It belongs to the RNA polymerase alpha chain family. In terms of assembly, homodimer. The RNAP catalytic core consists of 2 alpha, 1 beta, 1 beta' and 1 omega subunit. When a sigma factor is associated with the core the holoenzyme is formed, which can initiate transcription.

It catalyses the reaction RNA(n) + a ribonucleoside 5'-triphosphate = RNA(n+1) + diphosphate. Its function is as follows. DNA-dependent RNA polymerase catalyzes the transcription of DNA into RNA using the four ribonucleoside triphosphates as substrates. The protein is DNA-directed RNA polymerase subunit alpha of Azoarcus sp. (strain BH72).